The primary structure comprises 168 residues: MGDPKKPRKKWEGPRHPWRKEVLVQELKLLGTYGLRNKRELWRAQTIVRKFRHQARSLLAAPQEIREQAEKALLNRLYRLGLLHENASLEDVLGLTVEDLLERRLQTIVYKKGLARTIYHARQLIIHGHIAIAGRRITSPGYIVSREEEDLVDYAPTSPFKKSIEEKA.

An S4 RNA-binding domain is found at 103–167; sequence RRLQTIVYKK…SPFKKSIEEK (65 aa).

The protein belongs to the universal ribosomal protein uS4 family. As to quaternary structure, part of the 30S ribosomal subunit. Contacts protein S5. The interaction surface between S4 and S5 is involved in control of translational fidelity.

In terms of biological role, one of the primary rRNA binding proteins, it binds directly to 16S rRNA where it nucleates assembly of the body of the 30S subunit. Functionally, with S5 and S12 plays an important role in translational accuracy. The polypeptide is Small ribosomal subunit protein uS4 (Staphylothermus marinus (strain ATCC 43588 / DSM 3639 / JCM 9404 / F1)).